Reading from the N-terminus, the 180-residue chain is Adenine phosphoribosyltransferase (180 aa).

It belongs to the purine/pyrimidine phosphoribosyltransferase family. In terms of assembly, homodimer.

It localises to the cytoplasm. The catalysed reaction is AMP + diphosphate = 5-phospho-alpha-D-ribose 1-diphosphate + adenine. It functions in the pathway purine metabolism; AMP biosynthesis via salvage pathway; AMP from adenine: step 1/1. Catalyzes a salvage reaction resulting in the formation of AMP, that is energically less costly than de novo synthesis. This is Adenine phosphoribosyltransferase from Mycobacterium avium (strain 104).